A 1592-amino-acid chain; its full sequence is Probable serine/threonine-protein kinase DDB_G0293958 (1592 aa).

The 302-residue stretch at 1–302 (MTGFEIFKKK…CLNYLKEKLI (302 aa)) folds into the Protein kinase 1 domain. Residues 2–10 (TGFEIFKKK) and Lys43 each bind ATP. The active-site Proton acceptor is the Asp158. Disordered regions lie at residues 348 to 402 (INNN…NNNN), 455 to 526 (FNDI…SNYN), and 837 to 867 (KNNNNFYNNNNNNNNNNNNNNNNNNNSNDKS). Over residues 349 to 402 (NNNNNNNNNNNNNNNNNNNNNNNNNNNNNNNNNNNNNNNNNNNNNNNNNNNNNN) the composition is skewed to low complexity. Residues 461 to 518 (STTGEEEEEEKKDNLKRQNENNQIEQEDKGEKHLKETLNNNNNNNNNNNNNNNNNNNN) are a coiled coil. A compositionally biased stretch (basic and acidic residues) spans 486 to 496 (QEDKGEKHLKE). 2 stretches are compositionally biased toward low complexity: residues 499 to 526 (NNNNNNNNNNNNNNNNNNNNNNNNSNYN) and 837 to 864 (KNNNNFYNNNNNNNNNNNNNNNNNNNSN). Residues 1342-1592 (LGTYNLIGDS…KELIECLNKL (251 aa)) form the Protein kinase 2 domain. ATP-binding positions include 1348 to 1356 (IGDSVFRNI) and Lys1376. Catalysis depends on Asp1474, which acts as the Proton acceptor.

The protein belongs to the protein kinase superfamily. Ser/Thr protein kinase family.

It catalyses the reaction L-seryl-[protein] + ATP = O-phospho-L-seryl-[protein] + ADP + H(+). The enzyme catalyses L-threonyl-[protein] + ATP = O-phospho-L-threonyl-[protein] + ADP + H(+). The protein is Probable serine/threonine-protein kinase DDB_G0293958 of Dictyostelium discoideum (Social amoeba).